A 331-amino-acid polypeptide reads, in one-letter code: Cathepsin S (331 aa).

The N-terminal stretch at 1-16 is a signal peptide; it reads MKRLVCVLLVCSSAVA. Residues 17–114 constitute a propeptide, activation peptide; sequence QLHKDPTLDH…ITYKSNPNRI (98 aa). Asn104 carries an N-linked (GlcNAc...) asparagine glycan. Cystine bridges form between Cys126-Cys224, Cys136-Cys180, Cys170-Cys213, and Cys272-Cys320. Residue Cys139 is part of the active site. Catalysis depends on residues His278 and Asn298.

The protein belongs to the peptidase C1 family. As to quaternary structure, monomer.

It localises to the lysosome. The protein resides in the secreted. Its subcellular location is the cytoplasmic vesicle. It is found in the phagosome. It carries out the reaction Similar to cathepsin L, but with much less activity on Z-Phe-Arg-|-NHMec, and more activity on the Z-Val-Val-Arg-|-Xaa compound.. Its function is as follows. Thiol protease. Key protease responsible for the removal of the invariant chain from MHC class II molecules and MHC class II antigen presentation. The bond-specificity of this proteinase is in part similar to the specificities of cathepsin L. This is Cathepsin S (CTSS) from Homo sapiens (Human).